Consider the following 511-residue polypeptide: Cysteine--tRNA ligase 2, cytoplasmic (511 aa).

Residue Cys34 participates in Zn(2+) binding. The 'HIGH' region motif lies at 36–46 (ITAYDFSHIGH). 3 residues coordinate Zn(2+): Cys214, His239, and Glu243. The 'KMSKS' region motif lies at 271–275 (KMAKS). An ATP-binding site is contributed by Lys274. TPR repeat units follow at residues 315-348 (ESSSEALYYVYQTLQDLDEGLSPYQDALSEDGGK) and 368-401 (SKMLDDLNTAHILTGAYQDALKFINASLSKLKKM).

Belongs to the class-I aminoacyl-tRNA synthetase family. Zn(2+) is required as a cofactor.

It localises to the cytoplasm. It is found in the cytosol. It carries out the reaction tRNA(Cys) + L-cysteine + ATP = L-cysteinyl-tRNA(Cys) + AMP + diphosphate. This is Cysteine--tRNA ligase 2, cytoplasmic from Arabidopsis thaliana (Mouse-ear cress).